The primary structure comprises 81 residues: Lantipeptide prochlorosin 1.1 (81 aa).

A propeptide spanning residues 1–65 is cleaved from the precursor; the sequence is MSEEQLKAFI…DDDLEGVAGG (65 aa). Positions 68–72 form a cross-link, beta-methyllanthionine (Cys-Thr); sequence CVQGT. Positions 77–81 form a cross-link, beta-methyllanthionine (Thr-Cys); it reads TINVC.

Post-translationally, cross-links are proved in vitro, when coepressed in E.coli with the ProcM lanthionine synthetase. In terms of processing, the beta-methyllanthionine residues have a DL configuration (with 2S,3S,6R stereochemistry). Maturation of prochlorosin involves the enzymatic conversion of Thr, and Ser into dehydrated AA and the formation of thioether bonds with cysteines. This is followed by membrane translocation and cleavage of the modified precursor.

It localises to the secreted. Lanthionine-containing peptide (lantipeptide) with unknown function. Does not show antibiotic activity against Lactococcus lactis 117 and Bacillus subtilis 6633 bacteria. Organisms that produce this peptide live in oligotrophic environments at very dilute concentrations, suggesting this peptide is not secreted to influence other bacteria. The protein is Lantipeptide prochlorosin 1.1 of Prochlorococcus marinus (strain MIT 9313).